We begin with the raw amino-acid sequence, 21 residues long: Peptide PGLa-R5 (21 aa).

A Leucine amide modification is found at Leu21.

As to expression, expressed by the skin glands.

Its subcellular location is the secreted. Functionally, antimicrobial peptide. The protein is Peptide PGLa-R5 of Xenopus ruwenzoriensis (Uganda clawed frog).